Consider the following 276-residue polypeptide: uncharacterized protein (276 aa).

Positions 1 to 29 are cleaved as a signal peptide; the sequence is MKSHVRSFKTYIRDEIIKKGGWVNAHAHA.

The protein belongs to the metallo-dependent hydrolases superfamily.

This is an uncharacterized protein from Haemophilus influenzae (strain ATCC 51907 / DSM 11121 / KW20 / Rd).